We begin with the raw amino-acid sequence, 196 residues long: GTP cyclohydrolase-2 (196 aa).

Residue 49-53 (RVHSE) participates in GTP binding. Positions 54, 65, and 67 each coordinate Zn(2+). GTP-binding positions include Q70, 92–94 (EGR), and T114. D126 functions as the Proton acceptor in the catalytic mechanism. Residue R128 is the Nucleophile of the active site. GTP-binding residues include T149 and K154.

Belongs to the GTP cyclohydrolase II family. In terms of assembly, homodimer. Zn(2+) serves as cofactor.

The enzyme catalyses GTP + 4 H2O = 2,5-diamino-6-hydroxy-4-(5-phosphoribosylamino)-pyrimidine + formate + 2 phosphate + 3 H(+). It functions in the pathway cofactor biosynthesis; riboflavin biosynthesis; 5-amino-6-(D-ribitylamino)uracil from GTP: step 1/4. Functionally, catalyzes the conversion of GTP to 2,5-diamino-6-ribosylamino-4(3H)-pyrimidinone 5'-phosphate (DARP), formate and pyrophosphate. The chain is GTP cyclohydrolase-2 from Yersinia pestis.